A 276-amino-acid chain; its full sequence is F-actin-capping protein subunit beta (276 aa).

Belongs to the F-actin-capping protein beta subunit family. Component of the F-actin capping complex, composed of a heterodimer of an alpha and a beta subunit. Subunit of dynactin, a multiprotein complex part of a tripartite complex with dynein and a adapter, such as BICDL1, BICD2 or HOOK3.

The protein localises to the cytoplasm. The protein resides in the cytoskeleton. F-actin-capping proteins bind in a Ca(2+)-independent manner to the fast growing ends of actin filaments (barbed end) thereby blocking the exchange of subunits at these ends. Unlike other capping proteins (such as gelsolin and severin), these proteins do not sever actin filaments. Forms, with CAPZB, the barbed end of the fast growing ends of actin filaments in the dynactin complex and stabilizes dynactin structure. The dynactin multiprotein complex activates the molecular motor dynein for ultra-processive transport along microtubules. The chain is F-actin-capping protein subunit beta (cpb) from Drosophila melanogaster (Fruit fly).